The sequence spans 39 residues: Anthranilate phosphoribosyltransferase (39 aa).

This sequence belongs to the anthranilate phosphoribosyltransferase family. As to quaternary structure, homodimer.

The catalysed reaction is N-(5-phospho-beta-D-ribosyl)anthranilate + diphosphate = 5-phospho-alpha-D-ribose 1-diphosphate + anthranilate. Its pathway is amino-acid biosynthesis; L-tryptophan biosynthesis; L-tryptophan from chorismate: step 2/5. Catalyzes the transfer of the phosphoribosyl group of 5-phosphorylribose-1-pyrophosphate (PRPP) to anthranilate to yield N-(5'-phosphoribosyl)-anthranilate (PRA). This is Anthranilate phosphoribosyltransferase (trpD) from Pectobacterium carotovorum (Erwinia carotovora).